Reading from the N-terminus, the 554-residue chain is Formate--tetrahydrofolate ligase (554 aa).

ATP is bound at residue 64 to 71 (TPAGEGKS).

Belongs to the formate--tetrahydrofolate ligase family.

The enzyme catalyses (6S)-5,6,7,8-tetrahydrofolate + formate + ATP = (6R)-10-formyltetrahydrofolate + ADP + phosphate. The protein operates within one-carbon metabolism; tetrahydrofolate interconversion. The sequence is that of Formate--tetrahydrofolate ligase from Leuconostoc citreum (strain KM20).